A 602-amino-acid chain; its full sequence is Aspartate--tRNA(Asp/Asn) ligase (602 aa).

Residue Glu-176 coordinates L-aspartate. The segment at 200-203 (QQFK) is aspartate. 2 residues coordinate L-aspartate: Arg-222 and His-452. 222–224 (RDE) is an ATP binding site. Glu-490 provides a ligand contact to ATP. Arg-497 is a binding site for L-aspartate. 542–545 (GIDR) is a binding site for ATP.

Belongs to the class-II aminoacyl-tRNA synthetase family. Type 1 subfamily. In terms of assembly, homodimer.

It is found in the cytoplasm. The catalysed reaction is tRNA(Asx) + L-aspartate + ATP = L-aspartyl-tRNA(Asx) + AMP + diphosphate. Its function is as follows. Aspartyl-tRNA synthetase with relaxed tRNA specificity since it is able to aspartylate not only its cognate tRNA(Asp) but also tRNA(Asn). Reaction proceeds in two steps: L-aspartate is first activated by ATP to form Asp-AMP and then transferred to the acceptor end of tRNA(Asp/Asn). The protein is Aspartate--tRNA(Asp/Asn) ligase of Rickettsia akari (strain Hartford).